A 274-amino-acid chain; its full sequence is Ribosomal RNA small subunit methyltransferase A (274 aa).

S-adenosyl-L-methionine contacts are provided by histidine 15, leucine 17, glycine 42, glutamate 64, aspartate 89, and asparagine 109.

Belongs to the class I-like SAM-binding methyltransferase superfamily. rRNA adenine N(6)-methyltransferase family. RsmA subfamily.

It is found in the cytoplasm. The catalysed reaction is adenosine(1518)/adenosine(1519) in 16S rRNA + 4 S-adenosyl-L-methionine = N(6)-dimethyladenosine(1518)/N(6)-dimethyladenosine(1519) in 16S rRNA + 4 S-adenosyl-L-homocysteine + 4 H(+). Specifically dimethylates two adjacent adenosines (A1518 and A1519) in the loop of a conserved hairpin near the 3'-end of 16S rRNA in the 30S particle. May play a critical role in biogenesis of 30S subunits. This Synechococcus sp. (strain RCC307) protein is Ribosomal RNA small subunit methyltransferase A.